The sequence spans 185 residues: Transmembrane protein 252 (185 aa).

2 helical membrane-spanning segments follow: residues 8–28 (VLCA…GFFI) and 39–59 (LVVA…GIFW). A disordered region spans residues 125 to 149 (YTETSLEPQDKDKNDPQPEAPPPYP).

Its subcellular location is the membrane. The sequence is that of Transmembrane protein 252 (Tmem252) from Rattus norvegicus (Rat).